Consider the following 543-residue polypeptide: MRGAGQQPIIVLSQGTKRESGHQVQIGNINACKTIADVIRTSLGPRAMLKMLMDPMGGIVMTNDGNAILREITVKHPAAKSMIEIARTQDEETGDGTTSVIILAGEVMAHAQTYLEQKTHPTLIIKAYRQALEDMIQWSENKFSKTVDITDDAEIAKVVKSCLGTKMISKWMDLAVNISIQAVKTIRVEKAGVREIDIKRYCRIEKIPGGRIEDSQVVKGIVVNKDILHAKMRRRIENPRIVLLDCNLEYKKGESQTSLEIMREEDISAILEQEEQAIRKQCDEIIKLKPDLVFTEKGISDLAQHFLLKAGITCLRRLKKTDNNRLARVCGARVVHDTSDLRDEDVGTKAQLFEVVKIADEYYTYVTAETTTACTVVLRGPSKDVINEVERNLQDSLHVVRNIMINPKLVPGGGALEMALSREIEQQGAKMDGVKKWPYKAIGLALEVIPRTLIQNCGGSTIRKMTELRAIHAQNAENWTFGVDGTSGDLVDMNKLEIWDPLAVRIQVLKTAIETSVMLLRIDDIVSGTKKAVGGEKQEMMPQ.

It belongs to the TCP-1 chaperonin family.

The protein localises to the cytoplasm. In terms of biological role, molecular chaperone; assists the folding of proteins upon ATP hydrolysis. Known to play a role, in vitro, in the folding of actin and tubulin. Plays a role in microtubule polymerization. This Caenorhabditis elegans protein is T-complex protein 1 subunit gamma.